The sequence spans 229 residues: MKAVILLSGGLDSSTILYQAKADGCECYSISFDYQQRHRRELHSAFLVAQTAGIVQHQVINFDLRLWGGSALTDDNIDLPQERSLDAMSQNIPVTYVPARNTIFLSFALAYAEAIAAQRVYIGVNALDYSGYPDCRPDYIEAMQEVFRLGTKQGREGQPINIVAPLINLKKTEIIQLGNQLGVPWNLTWSCYAGGDVACGVCDSCRLRLAAFAELGLEDPLPYAYLKGV.

7 to 17 contacts ATP; it reads LSGGLDSSTIL. Zn(2+) is bound by residues Cys191, Cys199, Cys202, and Cys205.

Belongs to the QueC family. Zn(2+) is required as a cofactor.

It carries out the reaction 7-carboxy-7-deazaguanine + NH4(+) + ATP = 7-cyano-7-deazaguanine + ADP + phosphate + H2O + H(+). Its pathway is purine metabolism; 7-cyano-7-deazaguanine biosynthesis. In terms of biological role, catalyzes the ATP-dependent conversion of 7-carboxy-7-deazaguanine (CDG) to 7-cyano-7-deazaguanine (preQ(0)). The protein is 7-cyano-7-deazaguanine synthase of Nostoc sp. (strain PCC 7120 / SAG 25.82 / UTEX 2576).